The chain runs to 295 residues: Probable endonuclease 4 (295 aa).

Zn(2+)-binding residues include His-78, His-118, Glu-154, Asp-188, His-191, His-225, Asp-238, His-240, and Glu-270.

The protein belongs to the AP endonuclease 2 family. It depends on Zn(2+) as a cofactor.

It catalyses the reaction Endonucleolytic cleavage to 5'-phosphooligonucleotide end-products.. Endonuclease IV plays a role in DNA repair. It cleaves phosphodiester bonds at apurinic or apyrimidinic (AP) sites, generating a 3'-hydroxyl group and a 5'-terminal sugar phosphate. In Vibrio parahaemolyticus serotype O3:K6 (strain RIMD 2210633), this protein is Probable endonuclease 4.